A 481-amino-acid polypeptide reads, in one-letter code: Dihydrolipoyl dehydrogenase (481 aa).

FAD-binding positions include 34–42 and K51; that span reads EREHMGGIC. Cysteines 42 and 47 form a disulfide. Residues 195–199, E218, and 284–287 contribute to the NAD(+) site; these read GSGAI and AVGV. FAD contacts are provided by D326 and A334. The Proton acceptor role is filled by H460.

It belongs to the class-I pyridine nucleotide-disulfide oxidoreductase family. Homodimer. The cofactor is FAD.

It is found in the cytoplasm. The catalysed reaction is N(6)-[(R)-dihydrolipoyl]-L-lysyl-[protein] + NAD(+) = N(6)-[(R)-lipoyl]-L-lysyl-[protein] + NADH + H(+). Functionally, lipoamide dehydrogenase is a component of the alpha-ketoacid dehydrogenase complexes. The protein is Dihydrolipoyl dehydrogenase (lpdA) of Rhizobium etli (strain ATCC 51251 / DSM 11541 / JCM 21823 / NBRC 15573 / CFN 42).